We begin with the raw amino-acid sequence, 265 residues long: Hydroxyethylthiazole kinase 2 (265 aa).

Methionine 39 serves as a coordination point for substrate. The ATP site is built by lysine 115 and threonine 168. Position 195 (glycine 195) interacts with substrate.

This sequence belongs to the Thz kinase family. Mg(2+) serves as cofactor.

It carries out the reaction 5-(2-hydroxyethyl)-4-methylthiazole + ATP = 4-methyl-5-(2-phosphooxyethyl)-thiazole + ADP + H(+). It participates in cofactor biosynthesis; thiamine diphosphate biosynthesis; 4-methyl-5-(2-phosphoethyl)-thiazole from 5-(2-hydroxyethyl)-4-methylthiazole: step 1/1. In terms of biological role, catalyzes the phosphorylation of the hydroxyl group of 4-methyl-5-beta-hydroxyethylthiazole (THZ). The polypeptide is Hydroxyethylthiazole kinase 2 (Clostridium botulinum (strain 657 / Type Ba4)).